We begin with the raw amino-acid sequence, 272 residues long: MSTGGDRLPEAFLRPGSSSFVEFLREVAPQSHPEHARPAGAGDVVHATTIVALSFAGGIVMAGDRRATMGSFIAHREIEKVFPGDEYSAIGIAGTAGIGVELVRLFQLELEHFEKIEGAMLSLEGKANRLTTLLRGNLGLALQGLAAVPLFGGYDLDRAAGRIFSYDVTGGRYEERNHHSIGSGGMFARGSLKKLWRPGLGDRDAIAVALAALVDAADDDSATGGPDALRGIFPVVATVTAEGYRRIAEGELAGLVAEIDAARAQAREGDTR.

A propeptide spans 1–47 (removed in mature form; by autocatalysis); that stretch reads MSTGGDRLPEAFLRPGSSSFVEFLREVAPQSHPEHARPAGAGDVVHA. Catalysis depends on threonine 48, which acts as the Nucleophile.

This sequence belongs to the peptidase T1B family. As to quaternary structure, the 20S proteasome core is composed of 14 alpha and 14 beta subunits that assemble into four stacked heptameric rings, resulting in a barrel-shaped structure. The two inner rings, each composed of seven catalytic beta subunits, are sandwiched by two outer rings, each composed of seven alpha subunits. The catalytic chamber with the active sites is on the inside of the barrel. Has a gated structure, the ends of the cylinder being occluded by the N-termini of the alpha-subunits. Is capped by the proteasome-associated ATPase, ARC.

Its subcellular location is the cytoplasm. It carries out the reaction Cleavage of peptide bonds with very broad specificity.. It participates in protein degradation; proteasomal Pup-dependent pathway. With respect to regulation, the formation of the proteasomal ATPase ARC-20S proteasome complex, likely via the docking of the C-termini of ARC into the intersubunit pockets in the alpha-rings, may trigger opening of the gate for substrate entry. Interconversion between the open-gate and close-gate conformations leads to a dynamic regulation of the 20S proteasome proteolysis activity. In terms of biological role, component of the proteasome core, a large protease complex with broad specificity involved in protein degradation. In Beutenbergia cavernae (strain ATCC BAA-8 / DSM 12333 / CCUG 43141 / JCM 11478 / NBRC 16432 / NCIMB 13614 / HKI 0122), this protein is Proteasome subunit beta.